A 494-amino-acid polypeptide reads, in one-letter code: UPF0371 protein SP70585_0405 (494 aa).

The protein belongs to the UPF0371 family.

This is UPF0371 protein SP70585_0405 from Streptococcus pneumoniae (strain 70585).